A 174-amino-acid chain; its full sequence is SILNLCIISVDRYWAISRPFCYERKMTQRVALVMVGLAWTLSILISFIPVQLHWHRDKVGSRDGLDPPSNLANGTPWEEAGESDRSAENCDSSLNRTYAISSSLISFYIPVAIMIVTYTRIYRIAQVQIRRISSLERAAEHAQSCRSREACAPDSGLRASIKKETKVLKTLSVI.

Residues 1–10 form a helical membrane-spanning segment; sequence SILNLCIISV. Residues 11 to 32 lie on the Cytoplasmic side of the membrane; sequence DRYWAISRPFCYERKMTQRVAL. A helical transmembrane segment spans residues 33 to 54; it reads VMVGLAWTLSILISFIPVQLHW. At 55–96 the chain is on the extracellular side; it reads HRDKVGSRDGLDPPSNLANGTPWEEAGESDRSAENCDSSLNR. Positions 64 to 88 are disordered; that stretch reads GLDPPSNLANGTPWEEAGESDRSAE. A glycan (N-linked (GlcNAc...) asparagine) is linked at N95. Residues 97-119 traverse the membrane as a helical segment; the sequence is TYAISSSLISFYIPVAIMIVTYT. The Cytoplasmic segment spans residues 120–169; the sequence is RIYRIAQVQIRRISSLERAAEHAQSCRSREACAPDSGLRASIKKETKVLK. Residues 170-174 form a helical membrane-spanning segment; sequence TLSVI.

It belongs to the G-protein coupled receptor 1 family.

It is found in the cell membrane. Its function is as follows. Dopamine receptor whose activity is mediated by G proteins which activate adenylyl cyclase. The chain is D(1B) dopamine receptor (DRD5) from Bos taurus (Bovine).